An 851-amino-acid chain; its full sequence is Transforming growth factor beta receptor type 3 (851 aa).

Positions 1–20 (MTSHYVIAIFALMSSCLATA) are cleaved as a signal peptide. At 21–787 (GPEPGALCEL…IFHGLDTLTV (767 aa)) the chain is on the extracellular side. C52 and C197 are oxidised to a cystine. N-linked (GlcNAc...) asparagine glycosylation is found at N141 and N492. The region spanning 455–730 (KCDNEKMIVA…PKCVPPDEAC (276 aa)) is the ZP domain. Residues S534 and S545 are each glycosylated (O-linked (Xyl...) (glycosaminoglycan) serine). N571, N590, and N697 each carry an N-linked (GlcNAc...) asparagine glycan. Intrachain disulfides connect C639/C705, C660/C730, and C710/C723. Residues 737–751 (IIWAMMQNKKTFTKP) are interaction with TGF-beta ligand. Residues 788 to 809 (MGIAFAAFVIGALLTGALWYIY) form a helical membrane-spanning segment. The Cytoplasmic portion of the chain corresponds to 810–851 (SHTGETAGRQQVPTSPPASENSSAAHSIGSTQSTPCSSSSTA). The tract at residues 816–851 (AGRQQVPTSPPASENSSAAHSIGSTQSTPCSSSSTA) is disordered. Polar residues predominate over residues 817–834 (GRQQVPTSPPASENSSAA). Residues 836–851 (SIGSTQSTPCSSSSTA) show a composition bias toward low complexity. T840 is modified (phosphothreonine).

Forms homodimers and homooligomers. Interacts with DYNLT4. Interacts with integrin ITGA5:ITGB1; this interaction promotes the internalization and trafficking of ITGA5:ITGB1 into endocytic vesicles. Interacts with TGFB1, BMP2, BMP5, BMP7 or GDF5 and inhibin A via the ligand binding domains. Interacts with ALK3/BMPR1A; this interaction results in the cell surface retention of BMPR1A. Interacts with ALK6/BMPR1B; this interaction enhances BMPR1B-mediated stimulation of the BMP signaling pathway. Interacts with the scaffolding protein beta-arrestin2/ARRB2; this interaction mediates internalization of TGFBR3 and thus regulates migration, actin cytoskeleton and activation of CDC42. In terms of assembly, (Microbial infection) Interacts with human cytomegalovirus trimer complex composed of gH, gL, and gO; these interactions may promote HCMV cell entry in specific cell types. In terms of processing, extensively modified by glycosaminoglycan groups (GAG). Post-translationally, phosphorylated in the cytoplasmic domain by the type II receptor TGFBR2 at THR-840 to mediate recruitment of ARRB2 and subsequent internalization of TGFBR2 and TGFBR3.

The protein resides in the cell membrane. It localises to the secreted. Its subcellular location is the extracellular space. The protein localises to the extracellular matrix. Cell surface receptor that regulates diverse cellular processes including cell proliferation, differentiation, migration, and apoptosis. Initiates BMP, inhibin, and TGF-beta signaling pathways by interacting with different ligands including TGFB1, BMP2, BMP5, BMP7 or GDF5. Alternatively, acts as a cell surface coreceptor for BMP ligands, serving to enhance ligand binding by differentially regulating BMPR1A/ALK3 and BMPR1B/ALK6 receptor trafficking. Promotes epithelial cell adhesion, focal adhesion formation and integrin signaling during epithelial cell spreading on fibronectin. By interacting with the scaffolding protein beta-arrestin2/ARRB2, regulates migration or actin cytoskeleton and promotes the activation of CDC42 as well as the inhibition of NF-kappa-B. In gonadotrope cells, acts as an inhibin A coreceptor and regulates follicle-stimulating hormone (FSH) levels and female fertility. Plays a role in the inhibition of directed and random cell migration in epithelial cells by altering the actin cytoskeletal organization. Participates in epithelial-mesenchymal transformation (EMT) upon binding to BMP2 or TGFB2, by activating the PAR6/SMURF1/RHOA pathway. Functionally, (Microbial infection) May act as a receptor for human cytomegalovirus in different cell types by interacting with HCMV trimer composed of GO, GH and GL. The chain is Transforming growth factor beta receptor type 3 from Homo sapiens (Human).